Here is a 132-residue protein sequence, read N- to C-terminus: D-ribose pyranase (132 aa).

Residue H20 is the Proton donor of the active site. Substrate is bound by residues D28, H99, and Y121–N123.

Belongs to the RbsD / FucU family. RbsD subfamily. As to quaternary structure, homodecamer.

The protein resides in the cytoplasm. The enzyme catalyses beta-D-ribopyranose = beta-D-ribofuranose. Its pathway is carbohydrate metabolism; D-ribose degradation; D-ribose 5-phosphate from beta-D-ribopyranose: step 1/2. Functionally, catalyzes the interconversion of beta-pyran and beta-furan forms of D-ribose. The sequence is that of D-ribose pyranase from Lactococcus lactis subsp. cremoris (strain MG1363).